The sequence spans 1863 residues: MDLSAVRVEEVQNVINAMQKILECPICLELIKEPVSTKCDHIFCKFCMLKLLNQKKGPSQCPLCKNDITKRSLQESTRFSQLVEELLKIICAFQLDTGLQYANSYNFAKKENNSPEHLKDEVSIIQSMGYRNRAKRLLQSEPENPSLQETSPSVQLSNLGTVRTLRTKQRIQPQKKSVYIELGSDSSEDTVNKATYCSVGDQELLQITPQGTSDEISLDSAKKAACEFSETDVTNTEHHQPSNNDLNTTEKRATERHPEKYQGSSVSNLHVEPCGTNTHASSLQHENSSLLLTKDRMNVEKAEFCNKSKQPGLARSQHNRWAGSKETCNDRQTPSTEKKVDLNADPLCERKEWNKQKLPCSENPRDTEDVPWITLNSSIQKVNEWFSRSDELLGSDDSHDGRSESNAKVADVLDVLNEVDEYSGSSEKIDLLASDPHEALICKSERVHSKSVESNIEDKIFGKTYRRKASLPNLSHVTENLIIGAFVTEPQIIQERPLTNKLKRKRRATSGLHPEDFIKKADLAVQKTPEMINQGTNQMEQNGQVMNITNSGHENKTKGDSIQNEKNPNPIESLEKESAFKTKAEPISSSISNMELELNIHNSKAPKKNRLRRKSSTRHIHALELVVSRNLSPPNCTELQIDSCSSSEEIKKKKYNQMPVRHSRNLQLMEDKEPATGAKKSNKPNEQTSKRHDSDTFPELKLTNAPGSFTNCSNTSELKEFVNPSLPREEKEEKLGTVKVSNNAKDPKDLMLSGERVLQTERSVESSSISLVPGTDYGTQESISLLEVSTLGKAKTEPNKCVSQCAAFENPKELIHGCFKDTRNDTEGFKYPLGHEVNHSQETSIEMEESELDTQYLQNTFKVSKRQSFALFSNPGNPEEECATFSAHSRSLKKQSPKVTFECEQKEENQGKNESNIKPVQTANITAGFPVVCQKDKPVDYAKCSIKGGSRFCLSSQFRGNETGLITPNKHGLSQNPYHIPPLFPIKSFVKTKCKKNLLEENSEEHSMSPEREMGNENIPSTVSIISRNNIRENVFKEASSSNINEVGSSTNEVGSSINEVGSSDENIQAELGRSRGPKLNAMLRLGVLQPEVYKQSFPGSNGKHPEIKKQEYEEVLQTVNTDFSPCLISDNLEQPMRSSHASQVCSETPNDLLDDGEIKEDTSFAENDIKESSAVFSKSVQRGELSRSPSPFTHTHLAQGYRRGAKKLESSEENLSSEDEELPCFQHLLFGKVSNIPSQSTRHSTVATECLSKNTEENLLSLKNSLNDYSNQVILVKASQEHHLSEETKCSASLFSSQCSELEDLTANTNTQDRFFIGSSKQMRHQSESQGVGLSDKELVSDDEERGTDLEENNQEEQGVDSNLGEAASGYESETSVSEDCSGLSSQSDILTTQQRDTMQDNLIKLQQEMAELEAVLEQHGSQPSNSYPSIISDSSALEDLRNPEQSTSEKAVLTSQKSSEYPISQNPEGLSADKFEVSADSSTNKNKEPGVERSSPSKCPSLDDRWYMHSCSGSLQNGNYPSQEELIKVVDVEKQQLEESGPHDLTEPSYLPRQDLEGTPYLESGISLFSDDPESDASEDRAPESAHVGSIPSSTSALKVPQLKVAESAQSPAAAQTTNTAGYNAMEESVSREKPELTASTERVNKRMSMVVSGLTPEEFMLVYKFARKHHITLTNLITEETTHVVMKTDAEFVCERTLKYFLGIAGGKWVVSYFWVTQSIKERKMLNEHDFEVRGDVVNGRNHQGPKRARESQDRKIFRGLEICCYGPFTNMPTDQLEWIVQLCGASVVKELSSFTLGTGVHPIVVVQPDAWTEDNGFHAIGQMCEAPVVTREWVLDSVALYQCQELDTYLIPQIPHSHY.

Position 1 is an N-acetylmethionine (Met-1). The RING-type zinc-finger motif lies at 24 to 65; sequence CPICLELIKEPVSTKCDHIFCKFCMLKLLNQKKGPSQCPLCK. A Glycyl lysine isopeptide (Lys-Gly) (interchain with G-Cter in SUMO2) cross-link involves residue Lys-109. Ser-114 is subject to Phosphoserine. The tract at residues 231 to 267 is disordered; sequence TDVTNTEHHQPSNNDLNTTEKRATERHPEKYQGSSVS. The segment covering 248-260 has biased composition (basic and acidic residues); sequence TTEKRATERHPEK. Lys-301 participates in a covalent cross-link: Glycyl lysine isopeptide (Lys-Gly) (interchain with G-Cter in SUMO2). Residues 306–338 form a disordered region; that stretch reads NKSKQPGLARSQHNRWAGSKETCNDRQTPSTEK. Residue Lys-339 forms a Glycyl lysine isopeptide (Lys-Gly) (interchain with G-Cter in SUMO2) linkage. 4 positions are modified to phosphoserine: Ser-395, Ser-398, Ser-423, and Ser-434. Residues Lys-443, Lys-459, and Lys-519 each participate in a glycyl lysine isopeptide (Lys-Gly) (interchain with G-Cter in SUMO2) cross-link. The residue at position 551 (Ser-551) is a Phosphoserine. Glycyl lysine isopeptide (Lys-Gly) (interchain with G-Cter in SUMO2) cross-links involve residues Lys-583 and Lys-654. The segment at 650–735 is disordered; the sequence is IKKKKYNQMP…LPREEKEEKL (86 aa). Ser-694, Ser-708, and Ser-725 each carry phosphoserine. Positions 705 to 716 are enriched in polar residues; sequence APGSFTNCSNTS. Glycyl lysine isopeptide (Lys-Gly) (interchain with G-Cter in SUMO2) cross-links involve residues Lys-734 and Lys-739. Phosphoserine is present on residues Ser-753 and Ser-840. Glycyl lysine isopeptide (Lys-Gly) (interchain with G-Cter in SUMO2) cross-links involve residues Lys-918 and Lys-987. Ser-988 bears the Phosphoserine; by CHEK2 mark. Ser-1009 is modified (phosphoserine). Positions 1045–1066 are disordered; the sequence is NEVGSSTNEVGSSINEVGSSDE. Lys-1079 participates in a covalent cross-link: Glycyl lysine isopeptide (Lys-Gly) (interchain with G-Cter in SUMO2). Phosphoserine occurs at positions 1143, 1189, 1191, 1211, 1217, 1218, 1280, 1328, 1336, 1342, and 1387. Residues 1181–1216 are disordered; that stretch reads VQRGELSRSPSPFTHTHLAQGYRRGAKKLESSEENL. Residues 1322 to 1394 form a disordered region; the sequence is KQMRHQSESQ…LSSQSDILTT (73 aa). Residues 1342 to 1360 show a composition bias toward acidic residues; it reads SDDEERGTDLEENNQEEQG. The span at 1373–1394 shows a compositional bias: polar residues; that stretch reads ESETSVSEDCSGLSSQSDILTT. Thr-1394 carries the post-translational modification Phosphothreonine. The segment at 1397–1424 is interaction with PALB2; sequence RDTMQDNLIKLQQEMAELEAVLEQHGSQ. Phosphoserine is present on residues Ser-1423, Ser-1457, Ser-1524, and Ser-1542. The disordered stretch occupies residues 1440-1504; the sequence is EDLRNPEQST…RSSPSKCPSL (65 aa). Over residues 1445 to 1470 the composition is skewed to polar residues; it reads PEQSTSEKAVLTSQKSSEYPISQNPE. Disordered stretches follow at residues 1540-1597 and 1610-1642; these read EESG…PSST and SAQS…LTAS. Over residues 1610–1624 the composition is skewed to polar residues; that stretch reads SAQSPAAAQTTNTAG. 2 consecutive BRCT domains span residues 1642 to 1736 and 1756 to 1855; these read STER…DFEV and QDRK…TYLI.

In terms of assembly, heterodimer with BARD1. Part of the BRCA1-associated genome surveillance complex (BASC), which contains BRCA1, MSH2, MSH6, MLH1, ATM, BLM, PMS2 and the MRE11-RAD50-NBN protein (MRN) complex. This association could be a dynamic process changing throughout the cell cycle and within subnuclear domains. Component of the BRCA1-A complex, at least composed of BRCA1, BARD1, UIMC1/RAP80, ABRAXAS1, BRCC3/BRCC36, BABAM2 and BABAM1/NBA1. Interacts (via the BRCT domains) with ABRAXAS1 (phosphorylated form); this is important for recruitment to sites of DNA damage. Can form a heterotetramer with two molecules of ABRAXAS1 (phosphorylated form). Component of the BRCA1-RBBP8 complex. Interacts (via the BRCT domains) with RBBP8 ('Ser-327' phosphorylated form); the interaction ubiquitinates RBBP8, regulates CHEK1 activation, and involves RBBP8 in BRCA1-dependent G2/M checkpoint control on DNA damage. Associates with RNA polymerase II holoenzyme. Interacts with SMC1A, NELFB, DCLRE1C, CLSPN. CHEK1, CHEK2, BAP1, BRCC3, UBXN1 and PCLAF. Interacts (via BRCT domains) with BRIP1 (phosphorylated form). Interacts with FANCD2 (ubiquitinated form). Interacts with H2AX (phosphorylated on 'Ser-140'). Interacts (via the BRCT domains) with ACACA (phosphorylated form); the interaction prevents dephosphorylation of ACACA. Part of a BRCA complex containing BRCA1, BRCA2 and PALB2. Interacts directly with PALB2; the interaction is essential for its function in HRR. Interacts directly with BRCA2; the interaction occurs only in the presence of PALB2 which serves as the bridging protein. Interacts (via the BRCT domains) with LMO4; the interaction represses the transcriptional activity of BRCA1. Interacts (via the BRCT domains) with CCAR2 (via N-terminus); the interaction represses the transcriptional activator activity of BRCA1. Interacts with EXD2. Interacts (via C-terminus) with DHX9; this interaction is direct and links BRCA1 to the RNA polymerase II holoenzyme. Interacts with DNA helicase ZGRF1; the interaction is increased following DNA damage induction. Post-translationally, phosphorylated in response to IR, UV, and various stimuli that cause checkpoint activation, probably by ATM or ATR. Phosphorylation at Ser-988 by CHEK2 regulates mitotic spindle assembly. Phosphorylation by AURKA regulates centrosomal microtubule nucleation. In terms of processing, autoubiquitinated, undergoes 'Lys-6'-linked polyubiquitination. 'Lys-6'-linked polyubiquitination does not promote degradation.

Its subcellular location is the nucleus. The protein localises to the chromosome. It localises to the cytoplasm. It catalyses the reaction S-ubiquitinyl-[E2 ubiquitin-conjugating enzyme]-L-cysteine + [acceptor protein]-L-lysine = [E2 ubiquitin-conjugating enzyme]-L-cysteine + N(6)-ubiquitinyl-[acceptor protein]-L-lysine.. Its pathway is protein modification; protein ubiquitination. E3 ubiquitin-protein ligase that specifically mediates the formation of 'Lys-6'-linked polyubiquitin chains and plays a central role in DNA repair by facilitating cellular responses to DNA damage. It is unclear whether it also mediates the formation of other types of polyubiquitin chains. The BRCA1-BARD1 heterodimer coordinates a diverse range of cellular pathways such as DNA damage repair, ubiquitination and transcriptional regulation to maintain genomic stability. Regulates centrosomal microtubule nucleation. Required for appropriate cell cycle arrests after ionizing irradiation in both the S-phase and the G2 phase of the cell cycle. Required for FANCD2 targeting to sites of DNA damage. Inhibits lipid synthesis by binding to inactive phosphorylated ACACA and preventing its dephosphorylation. Contributes to homologous recombination repair (HRR) via its direct interaction with PALB2, fine-tunes recombinational repair partly through its modulatory role in the PALB2-dependent loading of BRCA2-RAD51 repair machinery at DNA breaks. Component of the BRCA1-RBBP8 complex which regulates CHEK1 activation and controls cell cycle G2/M checkpoints on DNA damage via BRCA1-mediated ubiquitination of RBBP8. Acts as a transcriptional activator. The chain is Breast cancer type 1 susceptibility protein homolog (BRCA1) from Pongo pygmaeus (Bornean orangutan).